Reading from the N-terminus, the 432-residue chain is Adenylosuccinate synthetase (432 aa).

Residues 12-18 and 40-42 each bind GTP; these read GDEGKGK and GHT. Aspartate 13 acts as the Proton acceptor in catalysis. Residues aspartate 13 and glycine 40 each coordinate Mg(2+). Residues 13–16, 38–41, threonine 132, arginine 146, glutamine 226, threonine 241, and arginine 305 each bind IMP; these read DEGK and NAGH. Histidine 41 acts as the Proton donor in catalysis. 301 to 307 serves as a coordination point for substrate; sequence TVTGRKR. Residues arginine 307, 333–335, and 415–417 contribute to the GTP site; these read KLD and STS.

The protein belongs to the adenylosuccinate synthetase family. In terms of assembly, homodimer. The cofactor is Mg(2+).

The protein localises to the cytoplasm. It catalyses the reaction IMP + L-aspartate + GTP = N(6)-(1,2-dicarboxyethyl)-AMP + GDP + phosphate + 2 H(+). It participates in purine metabolism; AMP biosynthesis via de novo pathway; AMP from IMP: step 1/2. Plays an important role in the de novo pathway of purine nucleotide biosynthesis. Catalyzes the first committed step in the biosynthesis of AMP from IMP. This is Adenylosuccinate synthetase from Rhizobium etli (strain ATCC 51251 / DSM 11541 / JCM 21823 / NBRC 15573 / CFN 42).